The following is a 364-amino-acid chain: Anthranilate phosphoribosyltransferase (364 aa).

Polar residues predominate over residues 1 to 10 (MTSGPSQPFP). Positions 1-22 (MTSGPSQPFPSASGPDDGPSWP) are disordered. 5-phospho-alpha-D-ribose 1-diphosphate contacts are provided by residues G101, 104–105 (GD), T109, 111–114 (NLST), 129–137 (KHGNRAASS), and G141. Position 101 (G101) interacts with anthranilate. S113 provides a ligand contact to Mg(2+). Residue N132 coordinates anthranilate. R187 contacts anthranilate. Mg(2+)-binding residues include D245 and E246.

The protein belongs to the anthranilate phosphoribosyltransferase family. Homodimer. Mg(2+) is required as a cofactor.

The enzyme catalyses N-(5-phospho-beta-D-ribosyl)anthranilate + diphosphate = 5-phospho-alpha-D-ribose 1-diphosphate + anthranilate. It functions in the pathway amino-acid biosynthesis; L-tryptophan biosynthesis; L-tryptophan from chorismate: step 2/5. In terms of biological role, catalyzes the transfer of the phosphoribosyl group of 5-phosphorylribose-1-pyrophosphate (PRPP) to anthranilate to yield N-(5'-phosphoribosyl)-anthranilate (PRA). In Mycolicibacterium smegmatis (strain ATCC 700084 / mc(2)155) (Mycobacterium smegmatis), this protein is Anthranilate phosphoribosyltransferase.